The sequence spans 474 residues: UDP-N-acetylmuramate--L-alanine ligase (474 aa).

122 to 128 (GTHGKTT) contributes to the ATP binding site.

Belongs to the MurCDEF family.

Its subcellular location is the cytoplasm. The enzyme catalyses UDP-N-acetyl-alpha-D-muramate + L-alanine + ATP = UDP-N-acetyl-alpha-D-muramoyl-L-alanine + ADP + phosphate + H(+). It participates in cell wall biogenesis; peptidoglycan biosynthesis. Cell wall formation. The protein is UDP-N-acetylmuramate--L-alanine ligase of Saccharophagus degradans (strain 2-40 / ATCC 43961 / DSM 17024).